Consider the following 508-residue polypeptide: Photosystem II CP47 reaction center protein (508 aa).

6 helical membrane passes run 21–36 (SVHIMHTALVSGWAGS), 101–115 (IVFSGLCFLAAIWHW), 140–156 (GIHLFLSGVACFGFGAF), 203–218 (IAAGTLGILAGLFHLS), 237–252 (VLSSSIAAVFFAAFVV), and 457–472 (SFALLFFFGHIWHGAR).

It belongs to the PsbB/PsbC family. PsbB subfamily. As to quaternary structure, PSII is composed of 1 copy each of membrane proteins PsbA, PsbB, PsbC, PsbD, PsbE, PsbF, PsbH, PsbI, PsbJ, PsbK, PsbL, PsbM, PsbT, PsbX, PsbY, PsbZ, Psb30/Ycf12, at least 3 peripheral proteins of the oxygen-evolving complex and a large number of cofactors. It forms dimeric complexes. The cofactor is Binds multiple chlorophylls. PSII binds additional chlorophylls, carotenoids and specific lipids..

It localises to the plastid. The protein resides in the chloroplast thylakoid membrane. Functionally, one of the components of the core complex of photosystem II (PSII). It binds chlorophyll and helps catalyze the primary light-induced photochemical processes of PSII. PSII is a light-driven water:plastoquinone oxidoreductase, using light energy to abstract electrons from H(2)O, generating O(2) and a proton gradient subsequently used for ATP formation. This is Photosystem II CP47 reaction center protein from Nuphar advena (Common spatterdock).